Reading from the N-terminus, the 549-residue chain is Acetyl-coenzyme A transporter 1 (549 aa).

A compositionally biased stretch (basic and acidic residues) spans 1-12 (MSPTISHKDSSR). The disordered stretch occupies residues 1–46 (MSPTISHKDSSRQRRPGNFSHSLDMKSGPLPPGGWDDSHLDSAGRE). The Cytoplasmic portion of the chain corresponds to 1-74 (MSPTISHKDS…PQSFRAELSS (74 aa)). Phosphoserine occurs at positions 22 and 42. Over residues 36–46 (DDSHLDSAGRE) the composition is skewed to basic and acidic residues. A helical membrane pass occupies residues 75-95 (ILLLLFLYVLQGIPLGLAGSI). Over 96 to 113 (PLILQSKNVSYTDQAFFS) the chain is Extracellular. A glycan (N-linked (GlcNAc...) asparagine) is linked at N103. A helical transmembrane segment spans residues 114–134 (FVFWPFSLKLLWAPLVDAVYV). The Cytoplasmic segment spans residues 135-141 (KNFGRRK). Residues 142–162 (SWLVPTQYILGLFMIYLSTQV) form a helical membrane-spanning segment. Topologically, residues 163–175 (DRLLGNTDDRTPD) are extracellular. The chain crosses the membrane as a helical span at residues 176 to 196 (VIALTVAFFLFEFLAATQDIA). The Cytoplasmic portion of the chain corresponds to 197–217 (VDGWALTMLSRENVGYASTCN). The chain crosses the membrane as a helical span at residues 218 to 238 (SVGQTAGYFLGNVLFLALESA). Residues 239-256 (DFCNKYLRFQPQPRGIVT) lie on the Extracellular side of the membrane. Residues 257–277 (LSDFLFFWGTVFLITTTLVAL) traverse the membrane as a helical segment. Topologically, residues 278–299 (LKKENEVSVVKEETQGITDTYK) are cytoplasmic. A helical transmembrane segment spans residues 300 to 320 (LLFAIIKMPAVLTFCLLILTA). The Extracellular segment spans residues 321–343 (KIGFSAADAVTGLKLVEEGVPKE). The helical transmembrane segment at 344-364 (HLALLAVPMVPLQIILPLIIS) threads the bilayer. Residues 365–378 (KYTAGPQPLNTFYK) lie on the Cytoplasmic side of the membrane. The helical transmembrane segment at 379-398 (AMPYRLLLGLEYALLVWWTP) threads the bilayer. The Extracellular segment spans residues 399–404 (KVEHQG). A helical transmembrane segment spans residues 405–425 (GFPIYYYIVVLLSYALHQVTV). The Cytoplasmic portion of the chain corresponds to 426–508 (YSMYVSIMAF…LGGSCVTALD (83 aa)). Residues 509–529 (GYYVESIICVFIGFGWWFFLG) traverse the membrane as a helical segment. Residues 530 to 549 (PKFKKLQDEGSSSWKCKRNN) are Extracellular-facing.

It belongs to the SLC33A transporter family. As to quaternary structure, homodimerizes. In terms of tissue distribution, ubiquitous. Detected in heart, brain, placenta, lung, liver, skeletal muscle, kidney and pancreas. With strongest signals in pancreas.

The protein localises to the endoplasmic reticulum membrane. It carries out the reaction acetyl-CoA(in) = acetyl-CoA(out). Functionally, acetyl-CoA transporter that mediates active acetyl-CoA import through the endoplasmic reticulum (ER) membrane into the ER lumen where specific ER-based acetyl-CoA:lysine acetyltransferases are responsible for the acetylation of ER-based protein substrates, such as BACE1. Necessary for O-acetylation of gangliosides. This Homo sapiens (Human) protein is Acetyl-coenzyme A transporter 1.